A 66-amino-acid chain; its full sequence is Large ribosomal subunit protein uL29 (66 aa).

The protein belongs to the universal ribosomal protein uL29 family.

This Lysinibacillus sphaericus (strain C3-41) protein is Large ribosomal subunit protein uL29.